Consider the following 493-residue polypeptide: 6-aminohexanoate-cyclic-dimer hydrolase (493 aa).

Catalysis depends on charge relay system residues Lys72 and Ser150. Ser174 acts as the Acyl-ester intermediate in catalysis.

It belongs to the amidase family. In terms of assembly, homodimer.

It catalyses the reaction 1,8-diazacyclotetradecane-2,9-dione + H2O = N-(6-aminohexanoyl)-6-aminohexanoate. Its pathway is xenobiotic degradation; nylon-6 oligomer degradation. Functionally, catalyzes the hydrolysis of 6-aminohexanoic acid cyclic dimer (1,8-diazacyclotetradecane-2,9-dione) to form the linear dimer 6-aminohexanoyl-6-aminohexanoic acid. This Pseudomonas sp. (strain NK87) protein is 6-aminohexanoate-cyclic-dimer hydrolase (nylA).